A 382-amino-acid polypeptide reads, in one-letter code: Cytoplasmic tRNA 2-thiolation protein 2 (382 aa).

This sequence belongs to the CTU2/NCS2 family.

Its subcellular location is the cytoplasm. It functions in the pathway tRNA modification; 5-methoxycarbonylmethyl-2-thiouridine-tRNA biosynthesis. Functionally, plays a central role in 2-thiolation of mcm(5)S(2)U at tRNA wobble positions of tRNA(Lys), tRNA(Glu) and tRNA(Gln). May act by forming a heterodimer with NCS6 that ligates sulfur from thiocarboxylated URM1 onto the uridine of tRNAs at wobble position. Prior mcm(5) tRNA modification by the elongator complex is required for 2-thiolation. May also be involved in protein urmylation. The chain is Cytoplasmic tRNA 2-thiolation protein 2 from Phaeosphaeria nodorum (strain SN15 / ATCC MYA-4574 / FGSC 10173) (Glume blotch fungus).